Reading from the N-terminus, the 477-residue chain is Proton-coupled amino acid transporter 3 (477 aa).

The Cytoplasmic segment spans residues 1–54; sequence MGNVPLLREVGKCQRNMFGRSTASSKGSSNSRSSSSTSPKKGPRREADALMFIQ. The span at 19-40 shows a compositional bias: low complexity; it reads GRSTASSKGSSNSRSSSSTSPK. The tract at residues 19-43 is disordered; the sequence is GRSTASSKGSSNSRSSSSTSPKKGP. A helical membrane pass occupies residues 55–75; it reads IFIHLLKSNIGTGFLGLPLAV. At 76-77 the chain is on the extracellular side; it reads KN. The helical transmembrane segment at 78-98 threads the bilayer; that stretch reads AGLLVGPVSLLAIGALTVHCM. Residues 99–144 are Cytoplasmic-facing; the sequence is DILLNCACHLTQRLQRSFVNYEETTMYSLETCPSPWLRTHSVWGRY. The helical transmembrane segment at 145-165 threads the bilayer; it reads VVSFLLIVTQLGFCSVYFMFL. At 166 to 202 the chain is on the extracellular side; it reads ADNLQQIMEEAHFTSNVCQPRQSLVMTSILDTRFYML. A helical transmembrane segment spans residues 203-223; sequence TILPFLILLVLIQNPQVLSIF. Residues 224-225 are Cytoplasmic-facing; sequence ST. A helical membrane pass occupies residues 226-246; it reads LATITTLSSLALIFEYLIQTP. The Extracellular segment spans residues 247-259; sequence HHSNLPLVANWKT. Residues 260 to 280 traverse the membrane as a helical segment; sequence FLLFFGTAIFTFEGVGMVLPL. Over 281–291 the chain is Cytoplasmic; it reads KSQMKSPQQFP. A helical transmembrane segment spans residues 292–312; that stretch reads AVLYLGMSFVIFLYICLGTLG. The Extracellular segment spans residues 313-344; that stretch reads YMKFGTDTQASITLNLPICWLYQSVKLMYSVG. A helical membrane pass occupies residues 345-365; it reads IFFTYALQFHVPAEIIVPYVV. Topologically, residues 366-374 are cytoplasmic; the sequence is SRVSENWAL. The chain crosses the membrane as a helical span at residues 375–395; that stretch reads FVDLTVRTALVCLTCFSAVLI. Over 396 to 399 the chain is Extracellular; that stretch reads PRLD. A helical transmembrane segment spans residues 400–420; it reads LVISLVGSVSSSALAIIIPPL. The Cytoplasmic segment spans residues 421-432; sequence LEIATFYSENIS. Residues 433–453 traverse the membrane as a helical segment; that stretch reads CATIVKDIMISILGLLGCVLG. The Extracellular segment spans residues 454-477; that stretch reads TYQALYEMTQQTHFYMANSTRVHI.

Belongs to the amino acid/polyamine transporter 2 family. As to expression, specifically expressed in testis.

Its subcellular location is the membrane. This is Proton-coupled amino acid transporter 3 (Slc36a3) from Mus musculus (Mouse).